Here is a 160-residue protein sequence, read N- to C-terminus: MPHSFGLRARTRYLFSRGFRNHGLLQTTTFLRTFRLGDYVDIKATGNVHKGMPHKFYHGRTGRVWNVTPRAVGVIINKRVGPRIIAKKIHVRTEHVKPSNSMAAHLKRIQENKKAVVEAKKAGKWVDVRRNPAAPKDGFFVNPRNTEFVEVKPVKYELLL.

It belongs to the eukaryotic ribosomal protein eL21 family.

The chain is Large ribosomal subunit protein eL21 (rpl21) from Dictyostelium discoideum (Social amoeba).